Reading from the N-terminus, the 175-residue chain is FOXL2 neighbor protein (175 aa).

2 disordered regions span residues 1–39 (MTRT…PALV) and 70–100 (AQKT…GKRR).

This is FOXL2 neighbor protein (FOXL2NB) from Homo sapiens (Human).